The sequence spans 364 residues: Methylthioribose-1-phosphate isomerase (364 aa).

Substrate contacts are provided by residues 51–53 (RGA), R88, and Q199. D240 functions as the Proton donor in the catalytic mechanism. 250-251 (NK) contributes to the substrate binding site.

It belongs to the eIF-2B alpha/beta/delta subunits family. MtnA subfamily.

It carries out the reaction 5-(methylsulfanyl)-alpha-D-ribose 1-phosphate = 5-(methylsulfanyl)-D-ribulose 1-phosphate. It participates in amino-acid biosynthesis; L-methionine biosynthesis via salvage pathway; L-methionine from S-methyl-5-thio-alpha-D-ribose 1-phosphate: step 1/6. Functionally, catalyzes the interconversion of methylthioribose-1-phosphate (MTR-1-P) into methylthioribulose-1-phosphate (MTRu-1-P). The sequence is that of Methylthioribose-1-phosphate isomerase from Cereibacter sphaeroides (strain KD131 / KCTC 12085) (Rhodobacter sphaeroides).